Here is a 101-residue protein sequence, read N- to C-terminus: NADH-quinone oxidoreductase subunit K (101 aa).

Transmembrane regions (helical) follow at residues 4–24 (LTHY…GIFL), 30–50 (IVLL…FIAF), and 61–81 (IFVF…LAIL).

The protein belongs to the complex I subunit 4L family. NDH-1 is composed of 14 different subunits. Subunits NuoA, H, J, K, L, M, N constitute the membrane sector of the complex.

The protein localises to the cell inner membrane. It catalyses the reaction a quinone + NADH + 5 H(+)(in) = a quinol + NAD(+) + 4 H(+)(out). In terms of biological role, NDH-1 shuttles electrons from NADH, via FMN and iron-sulfur (Fe-S) centers, to quinones in the respiratory chain. The immediate electron acceptor for the enzyme in this species is believed to be ubiquinone. Couples the redox reaction to proton translocation (for every two electrons transferred, four hydrogen ions are translocated across the cytoplasmic membrane), and thus conserves the redox energy in a proton gradient. The polypeptide is NADH-quinone oxidoreductase subunit K (Laribacter hongkongensis (strain HLHK9)).